The sequence spans 225 residues: Glutathione S-transferase-like protein tpcF (225 aa).

Residues 4-85 (IQPITVYGKG…YLVSHYDPDH (82 aa)) enclose the GST N-terminal domain. Positions 92–225 (GSNLAALATQ…KGMADIFPST (134 aa)) constitute a GST C-terminal domain.

This sequence belongs to the GST superfamily. In terms of tissue distribution, specifically expressed in conidia.

Its pathway is secondary metabolite biosynthesis. Its function is as follows. Glutathione S-transferase-like protein; part of the gene cluster that mediates the biosynthesis of trypacidin, a mycotoxin with antiprotozoal activity and that plays a role in the infection process. The pathway begins with the synthesis of atrochrysone thioester by the polyketide synthase (PKS) tpcC. The atrochrysone carboxyl ACP thioesterase tpcB then breaks the thioester bond and releases the atrochrysone carboxylic acid from tpcC. The decarboxylase tpcK converts atrochrysone carboxylic acid to atrochrysone which is further reduced into emodin anthrone. The next step is performed by the emodin anthrone oxygenase tpcL that catalyzes the oxidation of emodinanthrone to emodin. Emodin O-methyltransferase encoded by tpcA catalyzes methylation of the 8-hydroxy group of emodin to form questin. Ring cleavage of questin by questin oxidase tpcI leads to desmethylsulochrin via several intermediates including questin epoxide. Another methylation step catalyzed by tpcM leads to the formation of sulochrin which is further converted to monomethylsulfochrin by tpcH. Finally, the tpcJ catalyzes the conversion of monomethylsulfochrin to trypacidin. Trypacidin is toxic for human pulmonary and bronchial epithelial cells by initiating the intracellular formation of nitric oxide (NO) and hydrogen peroxide (H(2)O(2)), thus triggering host necrotic cell death. The trypacidin pathway is also able to produce endocrocin via a distinct route from the endocrocin Enc pathway. The protein is Glutathione S-transferase-like protein tpcF of Aspergillus fumigatus (strain ATCC MYA-4609 / CBS 101355 / FGSC A1100 / Af293) (Neosartorya fumigata).